Reading from the N-terminus, the 535-residue chain is Phosphoenolpyruvate carboxykinase (ATP) 1 (535 aa).

3 residues coordinate substrate: R58, Y193, and K199. ATP contacts are provided by residues K199, H218, and 234-242 (GLSGTGKTT). Mn(2+) contacts are provided by K199 and H218. D255 is a binding site for Mn(2+). ATP-binding positions include E283, R321, 440–441 (RI), and T446. R321 serves as a coordination point for substrate.

This sequence belongs to the phosphoenolpyruvate carboxykinase (ATP) family. The cofactor is Mn(2+).

Its subcellular location is the cytoplasm. It carries out the reaction oxaloacetate + ATP = phosphoenolpyruvate + ADP + CO2. Its pathway is carbohydrate biosynthesis; gluconeogenesis. Functionally, involved in the gluconeogenesis. Catalyzes the conversion of oxaloacetate (OAA) to phosphoenolpyruvate (PEP) through direct phosphoryl transfer between the nucleoside triphosphate and OAA. This Salinibacter ruber (strain DSM 13855 / M31) protein is Phosphoenolpyruvate carboxykinase (ATP) 1.